Consider the following 452-residue polypeptide: uncharacterized protein (452 aa).

The first 20 residues, 1-20 (MQFFGSLFVSLLGAAGLANA), serve as a signal peptide directing secretion. The interval 130 to 151 (TQSSSNSTSTMNSTGSVSGGSV) is disordered.

The protein localises to the endoplasmic reticulum. This is an uncharacterized protein from Schizosaccharomyces pombe (strain 972 / ATCC 24843) (Fission yeast).